We begin with the raw amino-acid sequence, 531 residues long: Putative lipase ATG15 (531 aa).

Residues 1–11 (MKPGIKISKRY) are Cytoplasmic-facing. Residues 12–31 (SARNASVITVLLLLIYLIYI) traverse the membrane as a helical; Signal-anchor for type II membrane protein segment. Over 32 to 531 (NKETIQTKYQ…WIGICTEYGI (500 aa)) the chain is Lumenal. Residues Asn178 and Asn207 are each glycosylated (N-linked (GlcNAc...) asparagine). Ser340 (charge relay system) is an active-site residue. The segment at 482–513 (VPKKHKSSSSTASSTSAETSTLTVGPSPPEKT) is disordered. Low complexity predominate over residues 489-502 (SSSTASSTSAETST).

The protein belongs to the AB hydrolase superfamily. Lipase family. Binds to both phosphatidylinositol (PI) and phosphatidylinositol 3,5-bisphosphate (PIP2).

It localises to the endosome. Its subcellular location is the multivesicular body membrane. The protein resides in the prevacuolar compartment membrane. It catalyses the reaction a triacylglycerol + H2O = a diacylglycerol + a fatty acid + H(+). Lipase which is essential for lysis of subvacuolar cytoplasm to vacuole targeted bodies and intravacuolar autophagic bodies. Involved in the lysis of intravacuolar multivesicular body (MVB) vesicles. The intravacuolar membrane disintegration by ATG15 is critical to life span extension. The chain is Putative lipase ATG15 (ATG15) from Kluyveromyces lactis (strain ATCC 8585 / CBS 2359 / DSM 70799 / NBRC 1267 / NRRL Y-1140 / WM37) (Yeast).